The following is a 407-amino-acid chain: MRGGLWQLGQSITRRLGQSDKKTIVRRCYASEADLKKTVLYDFHVAHGGKMVPFAGWSMPIQYKDSIMDSTINCRENGSLFDVSHMCGLSLKGKDCVAFLEKLVVADVAGLAPGTGSLTVFTNEKGGAIDDSVITKVTDDHIYLVVNAGCRDKDLAHIEEHMKAFKAKGGDVSWHIYDERSLLALQGPLAGSTLQHLTKEDLSKMYFGDFRIIDINGSKCFLTRTGYTGEDGFEISVPSENAVDLAKAILEKSEGKVRLTGLGARDSLRLEAGLCLYGNDMEQHITPVEAGLTWAIGKRRRAEGGFLGADVILKQIADGPAIRRVGLFSTGPPARSHSEIQNEKGENIGEVTSGGFSPCLKKNIGMGYVKSGLHKPGTKLKIVIRGKTYEGSVTKMPFVPTKYYKPA.

Residues 1-29 constitute a mitochondrion transit peptide; it reads MRGGLWQLGQSITRRLGQSDKKTIVRRCY. Glutamate 234, arginine 265, and tyrosine 403 together coordinate substrate.

It belongs to the GcvT family. As to quaternary structure, the glycine cleavage system is composed of four proteins: P, T, L and H.

The protein resides in the mitochondrion. The enzyme catalyses N(6)-[(R)-S(8)-aminomethyldihydrolipoyl]-L-lysyl-[protein] + (6S)-5,6,7,8-tetrahydrofolate = N(6)-[(R)-dihydrolipoyl]-L-lysyl-[protein] + (6R)-5,10-methylene-5,6,7,8-tetrahydrofolate + NH4(+). The glycine cleavage system catalyzes the degradation of glycine. The chain is Aminomethyltransferase, mitochondrial (GDCST) from Flaveria anomala (Yellowtops).